Consider the following 284-residue polypeptide: Serine/arginine-rich splicing factor RS2Z32 (284 aa).

The 71-residue stretch at 11-81 folds into the RRM domain; sequence TRLYVGRLSS…SRITVEASRG (71 aa). The interval 74–97 is disordered; it reads ITVEASRGAPRGSRDNGSRGPPPG. CCHC-type zinc fingers lie at residues 99–116 and 121–138; these read GRCF…DCTA and NKCY…NCKN. A disordered region spans residues 132–284; sequence IERNCKNSPS…RPSPKGSESP (153 aa). The span at 159–180 shows a compositional bias: basic residues; the sequence is RSPRRRRSPSRSRSYSRGRSYS. 3 positions are modified to phosphoserine: Ser-166, Ser-168, and Ser-184. A compositionally biased stretch (basic and acidic residues) spans 186–203; sequence VRREKSVEDRSRSPKAME. 10 positions are modified to phosphoserine: Ser-205, Ser-207, Ser-214, Ser-216, Ser-225, Ser-235, Ser-255, Ser-265, Ser-277, and Ser-281. The segment covering 209–236 has biased composition (basic and acidic residues); the sequence is KGRDQSLSPDRKVIDASPKRGSDYDGSP.

Belongs to the splicing factor SR family. RS2Z subfamily. As to quaternary structure, component of the spliceosome. Post-translationally, extensively phosphorylated on serine residues in the RS domain.

The protein localises to the nucleus. Its function is as follows. Probably involved in intron recognition and spliceosome assembly. The protein is Serine/arginine-rich splicing factor RS2Z32 (RS2Z32) of Arabidopsis thaliana (Mouse-ear cress).